The following is a 350-amino-acid chain: Nicotinate-nucleotide--dimethylbenzimidazole phosphoribosyltransferase (350 aa).

The Proton acceptor role is filled by glutamate 316.

The protein belongs to the CobT family.

It carries out the reaction 5,6-dimethylbenzimidazole + nicotinate beta-D-ribonucleotide = alpha-ribazole 5'-phosphate + nicotinate + H(+). Its pathway is nucleoside biosynthesis; alpha-ribazole biosynthesis; alpha-ribazole from 5,6-dimethylbenzimidazole: step 1/2. Functionally, catalyzes the synthesis of alpha-ribazole-5'-phosphate from nicotinate mononucleotide (NAMN) and 5,6-dimethylbenzimidazole (DMB). The chain is Nicotinate-nucleotide--dimethylbenzimidazole phosphoribosyltransferase from Bradyrhizobium diazoefficiens (strain JCM 10833 / BCRC 13528 / IAM 13628 / NBRC 14792 / USDA 110).